Reading from the N-terminus, the 381-residue chain is Subtilisin amylosacchariticus (381 aa).

The first 29 residues, 1–29 (MRSKKLWISLLFALTLIFTMAFSNMSAQA), serve as a signal peptide directing secretion. The propeptide occupies 30–106 (AGKSSTEKKY…VEEDHIAHEY (77 aa)). The Inhibitor I9 domain maps to 38–103 (KYIVGFKQTM…VAYVEEDHIA (66 aa)). Q108 is a binding site for Ca(2+). The Peptidase S8 domain occupies 111 to 380 (PYGISQIKAP…KGLINVQAAA (270 aa)). D138 acts as the Charge relay system in catalysis. D147 is a binding site for Ca(2+). H170 serves as the catalytic Charge relay system. Ca(2+)-binding residues include L181, N183, I185, V187, A275, Y277, and T280. The active-site Charge relay system is S327.

Belongs to the peptidase S8 family. Ca(2+) is required as a cofactor.

It is found in the secreted. The catalysed reaction is Hydrolysis of proteins with broad specificity for peptide bonds, and a preference for a large uncharged residue in P1. Hydrolyzes peptide amides.. Functionally, subtilisin is an extracellular alkaline serine protease, it catalyzes the hydrolysis of proteins and peptide amides. This chain is Subtilisin amylosacchariticus (apr), found in Bacillus subtilis subsp. amylosacchariticus.